Here is a 158-residue protein sequence, read N- to C-terminus: Transcription elongation factor GreA (158 aa).

Residues 47–73 (AEYHAAREKQSFIEGRIQELQAKLARA) adopt a coiled-coil conformation.

The protein belongs to the GreA/GreB family.

Its function is as follows. Necessary for efficient RNA polymerase transcription elongation past template-encoded arresting sites. The arresting sites in DNA have the property of trapping a certain fraction of elongating RNA polymerases that pass through, resulting in locked ternary complexes. Cleavage of the nascent transcript by cleavage factors such as GreA or GreB allows the resumption of elongation from the new 3'terminus. GreA releases sequences of 2 to 3 nucleotides. The chain is Transcription elongation factor GreA from Thermodesulfovibrio yellowstonii (strain ATCC 51303 / DSM 11347 / YP87).